Reading from the N-terminus, the 526-residue chain is Putative D-lactate dehydrogenase C713.03, mitochondrial (526 aa).

In terms of domain architecture, FAD-binding PCMH-type spans 93–272 (YRGKTQLALK…TKLSVICPKR (180 aa)).

It belongs to the FAD-binding oxidoreductase/transferase type 4 family. The cofactor is FAD.

Its subcellular location is the mitochondrion matrix. The enzyme catalyses (R)-lactate + 2 Fe(III)-[cytochrome c] = 2 Fe(II)-[cytochrome c] + pyruvate + 2 H(+). In Schizosaccharomyces pombe (strain 972 / ATCC 24843) (Fission yeast), this protein is Putative D-lactate dehydrogenase C713.03, mitochondrial.